The chain runs to 337 residues: Holliday junction branch migration complex subunit RuvB (337 aa).

Residues 1–179 (MTHQVSVLHQ…FSFTGRVAYY (179 aa)) form a large ATPase domain (RuvB-L) region. Residues L18, R19, G60, K63, T64, S65, 126–128 (EDY), R169, Y179, and R216 each bind ATP. Residue T64 participates in Mg(2+) binding. Positions 180-250 (SDEDLATILR…VAEKALAMLL (71 aa)) are small ATPAse domain (RuvB-S). The interval 253-337 (EWGLNEIDIK…DNLQSLGEEK (85 aa)) is head domain (RuvB-H). DNA is bound by residues K308 and R313.

Belongs to the RuvB family. Homohexamer. Forms an RuvA(8)-RuvB(12)-Holliday junction (HJ) complex. HJ DNA is sandwiched between 2 RuvA tetramers; dsDNA enters through RuvA and exits via RuvB. An RuvB hexamer assembles on each DNA strand where it exits the tetramer. Each RuvB hexamer is contacted by two RuvA subunits (via domain III) on 2 adjacent RuvB subunits; this complex drives branch migration. In the full resolvosome a probable DNA-RuvA(4)-RuvB(12)-RuvC(2) complex forms which resolves the HJ.

It localises to the cytoplasm. It carries out the reaction ATP + H2O = ADP + phosphate + H(+). The RuvA-RuvB-RuvC complex processes Holliday junction (HJ) DNA during genetic recombination and DNA repair, while the RuvA-RuvB complex plays an important role in the rescue of blocked DNA replication forks via replication fork reversal (RFR). RuvA specifically binds to HJ cruciform DNA, conferring on it an open structure. The RuvB hexamer acts as an ATP-dependent pump, pulling dsDNA into and through the RuvAB complex. RuvB forms 2 homohexamers on either side of HJ DNA bound by 1 or 2 RuvA tetramers; 4 subunits per hexamer contact DNA at a time. Coordinated motions by a converter formed by DNA-disengaged RuvB subunits stimulates ATP hydrolysis and nucleotide exchange. Immobilization of the converter enables RuvB to convert the ATP-contained energy into a lever motion, pulling 2 nucleotides of DNA out of the RuvA tetramer per ATP hydrolyzed, thus driving DNA branch migration. The RuvB motors rotate together with the DNA substrate, which together with the progressing nucleotide cycle form the mechanistic basis for DNA recombination by continuous HJ branch migration. Branch migration allows RuvC to scan DNA until it finds its consensus sequence, where it cleaves and resolves cruciform DNA. The chain is Holliday junction branch migration complex subunit RuvB from Chlamydia abortus (strain DSM 27085 / S26/3) (Chlamydophila abortus).